A 540-amino-acid polypeptide reads, in one-letter code: MKSLFLSAVLLQFFETCWSQFPRPCANSEGLRTKECCPVWSGDGSPCGALSGRGFCADVSVSDEPNGPQYPHSGIDDRERWPLAFFNRTCRCAGNYGGFNCGECRFGYWGSNCAEYRESVRRNIMSMSTTEQQKFISYLNLAKNTINPDYVITTGTRAEMGENGESPMFSDINTYDLFVWIHYYVSRDTFLGGPGNVWRDIDFAHESAAFLPWHRVYLLHWEQEIRKITGDFNFTIPYWDWRDAQSCEVCTDNLMGGRNALNPNLISPASVFSSWKVICTQQEEYNNQEALCNATAEGPLLRNPGNHDPNRVPRIPTTADVEFTISLPEYETGSMDRFANNSFRNVLEGFASPETGMAVQGQSTMHNALHVFMNGSMSSVQGSANDPIFLLHHAFIDSIFERWLRTHQPPRSIYPRTNAPIGHNDGYYMVPFLPLYRNGDYLLSNKALGYEYAYLLDPGQRFVQEFLTPYLQQAQQIWQWLLGAGILGALIATIVAAVIVFARRKRRRNQKRKRAPSFGERQPLLQSSSEEGSSSYQTTL.

The first 19 residues, 1 to 19 (MKSLFLSAVLLQFFETCWS), serve as a signal peptide directing secretion. Topologically, residues 20 to 480 (QFPRPCANSE…LQQAQQIWQW (461 aa)) are lumenal, melanosome. Asn-87 carries an N-linked (GlcNAc...) asparagine glycan. Positions 182, 205, and 214 each coordinate Cu cation. 3 N-linked (GlcNAc...) asparagine glycosylation sites follow: Asn-233, Asn-293, and Asn-340. Cu cation contacts are provided by His-366 and His-370. Residue Asn-374 is glycosylated (N-linked (GlcNAc...) asparagine). Position 393 (His-393) interacts with Cu cation. The chain crosses the membrane as a helical span at residues 481-501 (LLGAGILGALIATIVAAVIVF). Over 502–540 (ARRKRRRNQKRKRAPSFGERQPLLQSSSEEGSSSYQTTL) the chain is Cytoplasmic. Positions 511–540 (KRKRAPSFGERQPLLQSSSEEGSSSYQTTL) are disordered. A compositionally biased stretch (low complexity) spans 527–540 (SSSEEGSSSYQTTL).

The protein belongs to the tyrosinase family. The cofactor is Cu(2+).

Its subcellular location is the melanosome membrane. It carries out the reaction 2 L-dopa + O2 = 2 L-dopaquinone + 2 H2O. It catalyses the reaction L-tyrosine + O2 = L-dopaquinone + H2O. Its function is as follows. This is a copper-containing oxidase that functions in the formation of pigments such as melanins and other polyphenolic compounds. In Oryzias latipes (Japanese rice fish), this protein is Tyrosinase (tyr).